A 733-amino-acid chain; its full sequence is Methionine--tRNA ligase (733 aa).

Positions 11–21 match the 'HIGH' region motif; that stretch reads PYANGPIHAGH. Residues cysteine 143, cysteine 146, cysteine 156, and cysteine 159 each contribute to the Zn(2+) site. Residues 345–349 carry the 'KMSKS' region motif; sequence KFSTS. Threonine 348 is a binding site for ATP. In terms of domain architecture, tRNA-binding spans 633–733; the sequence is DFMKLDLRVG…KEVKLGARIR (101 aa).

Belongs to the class-I aminoacyl-tRNA synthetase family. MetG type 1 subfamily. In terms of assembly, homodimer. The cofactor is Zn(2+).

The protein resides in the cytoplasm. It carries out the reaction tRNA(Met) + L-methionine + ATP = L-methionyl-tRNA(Met) + AMP + diphosphate. Its function is as follows. Is required not only for elongation of protein synthesis but also for the initiation of all mRNA translation through initiator tRNA(fMet) aminoacylation. This is Methionine--tRNA ligase from Thermococcus onnurineus (strain NA1).